We begin with the raw amino-acid sequence, 338 residues long: Glycerol-3-phosphate dehydrogenase [NAD(P)+] (338 aa).

4 residues coordinate NADPH: S12, W13, K34, and K110. Residues K110, G141, and S143 each contribute to the sn-glycerol 3-phosphate site. Residue A145 coordinates NADPH. K196, D249, S259, R260, and N261 together coordinate sn-glycerol 3-phosphate. Catalysis depends on K196, which acts as the Proton acceptor. R260 serves as a coordination point for NADPH. V284 and E286 together coordinate NADPH.

The protein belongs to the NAD-dependent glycerol-3-phosphate dehydrogenase family.

Its subcellular location is the cytoplasm. It catalyses the reaction sn-glycerol 3-phosphate + NAD(+) = dihydroxyacetone phosphate + NADH + H(+). The enzyme catalyses sn-glycerol 3-phosphate + NADP(+) = dihydroxyacetone phosphate + NADPH + H(+). Its pathway is membrane lipid metabolism; glycerophospholipid metabolism. Catalyzes the reduction of the glycolytic intermediate dihydroxyacetone phosphate (DHAP) to sn-glycerol 3-phosphate (G3P), the key precursor for phospholipid synthesis. The sequence is that of Glycerol-3-phosphate dehydrogenase [NAD(P)+] from Ligilactobacillus salivarius (strain UCC118) (Lactobacillus salivarius).